We begin with the raw amino-acid sequence, 177 residues long: Putative 3-methyladenine DNA glycosylase (177 aa).

It belongs to the DNA glycosylase MPG family.

The sequence is that of Putative 3-methyladenine DNA glycosylase from Rickettsia felis (strain ATCC VR-1525 / URRWXCal2) (Rickettsia azadi).